Here is a 149-residue protein sequence, read N- to C-terminus: MLKRLLLLLVLATPVHAVQPDEVLSDPGLEARARQISQVLRCPVCQGENIDESNAGVSRDLRLAVRERLVAGDSDAQVIDYIKDRFGEYVLFEPERRGANLILYWIGPAVLVVALGGIFLWLRGRRREEEPVPVLSAEEEARLKDLLKD.

The N-terminal stretch at 1–17 (MLKRLLLLLVLATPVHA) is a signal peptide. Heme contacts are provided by cysteine 42 and cysteine 45.

It belongs to the CcmH/CycL/Ccl2/NrfF family.

It localises to the periplasm. Functionally, required for the biogenesis of c-type cytochromes. Possible subunit of a heme lyase. This chain is Cytochrome c-type biogenesis protein Ccl2 (ccl2), found in Rhodobacter capsulatus (strain ATCC BAA-309 / NBRC 16581 / SB1003).